Here is a 159-residue protein sequence, read N- to C-terminus: Ribosomal RNA large subunit methyltransferase H (159 aa).

2 residues coordinate S-adenosyl-L-methionine: L76 and G108.

Belongs to the RNA methyltransferase RlmH family. Homodimer.

Its subcellular location is the cytoplasm. The enzyme catalyses pseudouridine(1915) in 23S rRNA + S-adenosyl-L-methionine = N(3)-methylpseudouridine(1915) in 23S rRNA + S-adenosyl-L-homocysteine + H(+). Specifically methylates the pseudouridine at position 1915 (m3Psi1915) in 23S rRNA. The chain is Ribosomal RNA large subunit methyltransferase H from Finegoldia magna (strain ATCC 29328 / DSM 20472 / WAL 2508) (Peptostreptococcus magnus).